The primary structure comprises 724 residues: Methionine--tRNA ligase (724 aa).

Positions 11–21 (PYANGPIHAGH) match the 'HIGH' region motif. Residues Cys-143, Cys-146, Cys-156, and Cys-159 each contribute to the Zn(2+) site. The 'KMSKS' region motif lies at 344-348 (KFSTS). Thr-347 lines the ATP pocket. In terms of domain architecture, tRNA-binding spans 624 to 724 (EFSKIDLRIG…KEVKLGAKVR (101 aa)).

This sequence belongs to the class-I aminoacyl-tRNA synthetase family. MetG type 1 subfamily. As to quaternary structure, homodimer. It depends on Zn(2+) as a cofactor.

It is found in the cytoplasm. It carries out the reaction tRNA(Met) + L-methionine + ATP = L-methionyl-tRNA(Met) + AMP + diphosphate. In terms of biological role, is required not only for elongation of protein synthesis but also for the initiation of all mRNA translation through initiator tRNA(fMet) aminoacylation. This Pyrococcus furiosus (strain ATCC 43587 / DSM 3638 / JCM 8422 / Vc1) protein is Methionine--tRNA ligase.